The sequence spans 171 residues: Large ribosomal subunit protein bL9 (171 aa).

Belongs to the bacterial ribosomal protein bL9 family.

In terms of biological role, binds to the 23S rRNA. The polypeptide is Large ribosomal subunit protein bL9 (Orientia tsutsugamushi (strain Ikeda) (Rickettsia tsutsugamushi)).